Reading from the N-terminus, the 448-residue chain is JmjC domain-containing protein D (448 aa).

The JmjC domain occupies 305 to 448; the sequence is EQIPQLRNDI…SLSQSFSIFP (144 aa).

In Dictyostelium discoideum (Social amoeba), this protein is JmjC domain-containing protein D (jcdD).